The following is a 338-amino-acid chain: Ketol-acid reductoisomerase (NADP(+)) (338 aa).

In terms of domain architecture, KARI N-terminal Rossmann spans 1 to 181 (MKVFYDKDAD…GGGRAGIIET (181 aa)). NADP(+) contacts are provided by residues 24-27 (YGSQ), Arg47, and Ser52. His107 is a catalytic residue. Gly133 is a binding site for NADP(+). Residues 182 to 327 (NFREETETDL…AKLRAMMPWI (146 aa)) form the KARI C-terminal knotted domain. Mg(2+)-binding residues include Asp190, Glu194, Glu226, and Glu230. Ser251 is a binding site for substrate.

This sequence belongs to the ketol-acid reductoisomerase family. It depends on Mg(2+) as a cofactor.

It carries out the reaction (2R)-2,3-dihydroxy-3-methylbutanoate + NADP(+) = (2S)-2-acetolactate + NADPH + H(+). The enzyme catalyses (2R,3R)-2,3-dihydroxy-3-methylpentanoate + NADP(+) = (S)-2-ethyl-2-hydroxy-3-oxobutanoate + NADPH + H(+). It functions in the pathway amino-acid biosynthesis; L-isoleucine biosynthesis; L-isoleucine from 2-oxobutanoate: step 2/4. Its pathway is amino-acid biosynthesis; L-valine biosynthesis; L-valine from pyruvate: step 2/4. In terms of biological role, involved in the biosynthesis of branched-chain amino acids (BCAA). Catalyzes an alkyl-migration followed by a ketol-acid reduction of (S)-2-acetolactate (S2AL) to yield (R)-2,3-dihydroxy-isovalerate. In the isomerase reaction, S2AL is rearranged via a Mg-dependent methyl migration to produce 3-hydroxy-3-methyl-2-ketobutyrate (HMKB). In the reductase reaction, this 2-ketoacid undergoes a metal-dependent reduction by NADPH to yield (R)-2,3-dihydroxy-isovalerate. This Ralstonia pickettii (strain 12J) protein is Ketol-acid reductoisomerase (NADP(+)).